A 606-amino-acid polypeptide reads, in one-letter code: NADH-ubiquinone oxidoreductase chain 5 (606 aa).

16 helical membrane passes run 1–21, 35–55, 87–107, 114–134, 140–160, 171–191, 211–233, 241–261, 272–292, 301–320, 325–347, 366–386, 413–433, 457–477, 482–502, and 582–602; these read MNLF…PIMM, YVKN…MVYL, LMFM…SMWY, INQF…LVTA, LFIG…WWFG, AILY…WFLS, FPLM…HPWL, TPVS…FLLV, LIQT…AICA, IIAF…IGLN, AFLH…GSII, LPFT…MPFL, LIAT…ALLG, LLVG…PMTT, MPLH…IIAF, and GLIK…MILF.

This sequence belongs to the complex I subunit 5 family. As to quaternary structure, core subunit of respiratory chain NADH dehydrogenase (Complex I) which is composed of 45 different subunits.

It is found in the mitochondrion inner membrane. It catalyses the reaction a ubiquinone + NADH + 5 H(+)(in) = a ubiquinol + NAD(+) + 4 H(+)(out). Its function is as follows. Core subunit of the mitochondrial membrane respiratory chain NADH dehydrogenase (Complex I) which catalyzes electron transfer from NADH through the respiratory chain, using ubiquinone as an electron acceptor. Essential for the catalytic activity and assembly of complex I. This chain is NADH-ubiquinone oxidoreductase chain 5 (MT-ND5), found in Balaenoptera physalus (Fin whale).